Reading from the N-terminus, the 333-residue chain is Homeobox protein Nkx-3.2 (333 aa).

Disordered stretches follow at residues 74 to 121 (PART…RARV) and 137 to 212 (DLEE…SRAA). Positions 137–148 (DLEEEAPVRSDS) are enriched in basic and acidic residues. Residues 179–191 (GAAGSGASGGQAG) show a composition bias toward gly residues. The segment at residues 206–265 (KKRSRAAFSHAQVFELERRFNHQRYLSGPERADLAASLKLTETQVKIWFQNRRYKTKRRQ) is a DNA-binding region (homeobox).

It belongs to the NK-3 homeobox family. In terms of tissue distribution, expressed widely in mesoderm at the gastroduodenal junction (at protein level). Expressed in visceral mesoderm and embryonic skeleton. Expression is restricted to immature proliferative chondrocytes during endochondral ossification.

The protein resides in the nucleus. Functionally, transcriptional repressor that acts as a negative regulator of chondrocyte maturation. PLays a role in distal stomach development; required for proper antral-pyloric morphogenesis and development of antral-type epithelium. In concert with GSC, defines the structural components of the middle ear; required for tympanic ring and gonium development and in the regulation of the width of the malleus. This Mus musculus (Mouse) protein is Homeobox protein Nkx-3.2 (Nkx3-2).